We begin with the raw amino-acid sequence, 169 residues long: Desumoylating isopeptidase 1 (169 aa).

Residues 8–150 enclose the PPPDE domain; sequence HLVRLYVYDM…LGQALRPLLD (143 aa). His-39 is a catalytic residue. The short motif at 84-92 is the Nuclear export signal 1 element; that stretch reads IFLEYLSSL. Residue Cys-109 is part of the active site. Residues 140–154 carry the Nuclear export signal 2 motif; the sequence is PLGQALRPLLDSVQI.

The protein belongs to the DeSI family. Homodimer.

It localises to the cytoplasm. The protein localises to the nucleus. The catalysed reaction is S-hexadecanoyl-L-cysteinyl-[protein] + H2O = L-cysteinyl-[protein] + hexadecanoate + H(+). In terms of biological role, protease which deconjugates SUMO1, SUMO2 and SUMO3 from some substrate proteins. Has isopeptidase but not SUMO-processing activity. Collaborates with ubqln4 in the export of ubiquitinated proteins from the nucleus to the cytoplasm. Exhibits palmitoyl protein thioesterase (S-depalmitoylation) activity towards synthetic substrates 4-methylumbelliferyl-6-S-palmitoyl-beta-D-glucopyranoside and S-depalmitoylation probe 5 (DPP-5). The chain is Desumoylating isopeptidase 1 from Xenopus laevis (African clawed frog).